A 230-amino-acid polypeptide reads, in one-letter code: Small ribosomal subunit protein uS3 (230 aa).

The KH type-2 domain maps to 39–107; the sequence is IRKFLTEKLK…PAQINISEVR (69 aa).

This sequence belongs to the universal ribosomal protein uS3 family. Part of the 30S ribosomal subunit. Forms a tight complex with proteins S10 and S14.

Binds the lower part of the 30S subunit head. Binds mRNA in the 70S ribosome, positioning it for translation. The polypeptide is Small ribosomal subunit protein uS3 (Psychromonas ingrahamii (strain DSM 17664 / CCUG 51855 / 37)).